A 439-amino-acid chain; its full sequence is Histidinol dehydrogenase (439 aa).

Tyr125, Gln187, and Asn210 together coordinate NAD(+). The substrate site is built by Thr233, Gln255, and His258. Residues Gln255 and His258 each contribute to the Zn(2+) site. Residues Glu323 and His324 each act as proton acceptor in the active site. Positions 324, 357, 411, and 416 each coordinate substrate. Asp357 is a Zn(2+) binding site. His416 serves as a coordination point for Zn(2+).

The protein belongs to the histidinol dehydrogenase family. The cofactor is Zn(2+).

The enzyme catalyses L-histidinol + 2 NAD(+) + H2O = L-histidine + 2 NADH + 3 H(+). It functions in the pathway amino-acid biosynthesis; L-histidine biosynthesis; L-histidine from 5-phospho-alpha-D-ribose 1-diphosphate: step 9/9. Its function is as follows. Catalyzes the sequential NAD-dependent oxidations of L-histidinol to L-histidinaldehyde and then to L-histidine. In Symbiobacterium thermophilum (strain DSM 24528 / JCM 14929 / IAM 14863 / T), this protein is Histidinol dehydrogenase.